Consider the following 248-residue polypeptide: Clathrin light chain A (248 aa).

Positions 1 to 92 (MAELDPFGAP…YYQESNGPTD (92 aa)) are disordered. Gly residues predominate over residues 13–25 (APGGPALGNGVAG). The span at 61-71 (GPQPHGEPPGG) shows a compositional bias: pro residues. The segment at 100 to 162 (VDRLQSEPES…QLQKTKANNR (63 aa)) is involved in binding clathrin heavy chain. 2 positions are modified to phosphoserine: S105 and S206. K223 carries the N6-acetyllysine modification. At S236 the chain carries Phosphoserine. K242 bears the N6-acetyllysine mark.

It belongs to the clathrin light chain family. In terms of assembly, clathrin coats are formed from molecules containing 3 heavy chains and 3 light chains. Interacts with CALY; the interaction stimulates clathrin self-assembly and clathrin-mediated endocytosis. Interacts with CKAP5 and TACC3 forming the TACC3/ch-TOG/clathrin complex located at spindle inter-microtubules bridges; the complex implicates clathrin triskelions.

Its subcellular location is the cytoplasmic vesicle membrane. It localises to the membrane. The protein localises to the coated pit. It is found in the cytoplasm. The protein resides in the cytoskeleton. Its subcellular location is the spindle. In terms of biological role, clathrin is the major protein of the polyhedral coat of coated pits and vesicles. Acts as a component of the TACC3/ch-TOG/clathrin complex proposed to contribute to stabilization of kinetochore fibers of the mitotic spindle by acting as inter-microtubule bridge. The polypeptide is Clathrin light chain A (CLTA) (Homo sapiens (Human)).